The primary structure comprises 472 residues: 3-isopropylmalate dehydratase large subunit (472 aa).

3 residues coordinate [4Fe-4S] cluster: C349, C409, and C412.

Belongs to the aconitase/IPM isomerase family. LeuC type 1 subfamily. Heterodimer of LeuC and LeuD. The cofactor is [4Fe-4S] cluster.

The enzyme catalyses (2R,3S)-3-isopropylmalate = (2S)-2-isopropylmalate. The protein operates within amino-acid biosynthesis; L-leucine biosynthesis; L-leucine from 3-methyl-2-oxobutanoate: step 2/4. Catalyzes the isomerization between 2-isopropylmalate and 3-isopropylmalate, via the formation of 2-isopropylmaleate. This chain is 3-isopropylmalate dehydratase large subunit, found in Rhodospirillum rubrum (strain ATCC 11170 / ATH 1.1.1 / DSM 467 / LMG 4362 / NCIMB 8255 / S1).